A 312-amino-acid chain; its full sequence is Olfactory receptor 2L3 (312 aa).

Residues 1–24 (MENYNQTSTDFILLGFFPPSRIGL) lie on the Extracellular side of the membrane. Residue Asn5 is glycosylated (N-linked (GlcNAc...) asparagine). Residues 25–48 (FLFILIVFIFLMALIGNLSMILLI) traverse the membrane as a helical segment. Over 49 to 56 (FLDTHLHT) the chain is Cytoplasmic. The chain crosses the membrane as a helical span at residues 57-78 (PMYFLLSQLSLIDLNYISTIVP). Over 79-99 (KMASDFLSGNKSISFTGCGIQ) the chain is Extracellular. Asn88 carries an N-linked (GlcNAc...) asparagine glycan. Residues Cys96 and Cys188 are joined by a disulfide bond. The chain crosses the membrane as a helical span at residues 100-119 (SFFFSALGGAEALLLASMAY). Over 120 to 138 (DRYIAICFPLHYPIRMSKR) the chain is Cytoplasmic. A helical membrane pass occupies residues 139–157 (MCVLMITGSWIIGSINACA). Residues 158–194 (HTVYVLHIPYCQSRAINHFFCDVPAMVTLACMDTWVY) lie on the Extracellular side of the membrane. Residues 195-218 (EGTVFLSTTIFLVFPFIAISCSYG) form a helical membrane-spanning segment. Residues 219–235 (RVLLAVYHMKSAEGRKK) lie on the Cytoplasmic side of the membrane. A helical membrane pass occupies residues 236–258 (AYLTCSTHLTVVTFYYAPFVYTY). The Extracellular portion of the chain corresponds to 259–271 (LRPRSLRSPTEDK). The helical transmembrane segment at 272–291 (VLAVFYTTLTPMLNPIIYSL) threads the bilayer. The Cytoplasmic portion of the chain corresponds to 292–312 (RNKEVMGALTRVSQRICSGKM).

It belongs to the G-protein coupled receptor 1 family.

The protein resides in the cell membrane. Its function is as follows. Odorant receptor. This chain is Olfactory receptor 2L3 (OR2L3), found in Homo sapiens (Human).